Consider the following 376-residue polypeptide: Erythronate-4-phosphate dehydrogenase (376 aa).

Substrate-binding residues include S45 and T67. D147 contacts NAD(+). The active site involves R209. D233 provides a ligand contact to NAD(+). E238 is a catalytic residue. H255 functions as the Proton donor in the catalytic mechanism. G258 provides a ligand contact to NAD(+). Residue Y259 participates in substrate binding.

The protein belongs to the D-isomer specific 2-hydroxyacid dehydrogenase family. PdxB subfamily. Homodimer.

Its subcellular location is the cytoplasm. The catalysed reaction is 4-phospho-D-erythronate + NAD(+) = (R)-3-hydroxy-2-oxo-4-phosphooxybutanoate + NADH + H(+). It functions in the pathway cofactor biosynthesis; pyridoxine 5'-phosphate biosynthesis; pyridoxine 5'-phosphate from D-erythrose 4-phosphate: step 2/5. In terms of biological role, catalyzes the oxidation of erythronate-4-phosphate to 3-hydroxy-2-oxo-4-phosphonooxybutanoate. This Shewanella sp. (strain ANA-3) protein is Erythronate-4-phosphate dehydrogenase.